Consider the following 703-residue polypeptide: 1,4-alpha-glucan-branching enzyme (703 aa).

Tryptophan 93 and lysine 130 together coordinate (1,4-alpha-D-glucosyl)n. Residue aspartate 355 is the Nucleophile of the active site. Glutamate 415 (proton donor) is an active-site residue.

The protein belongs to the glycosyl hydrolase 13 family. GlgB subfamily.

The protein localises to the cytoplasm. The enzyme catalyses Transfers a segment of a (1-&gt;4)-alpha-D-glucan chain to a primary hydroxy group in a similar glucan chain.. It functions in the pathway glycan biosynthesis; glycogen biosynthesis. Functionally, glycogen-branching enzyme participates in the glycogen biosynthetic process along with glycogenin and glycogen synthase. Generates alpha-1,6-glucosidic branches from alpha-1,4-linked glucose chains, to increase solubility of the glycogen polymer. The chain is 1,4-alpha-glucan-branching enzyme (GLC3) from Eremothecium gossypii (strain ATCC 10895 / CBS 109.51 / FGSC 9923 / NRRL Y-1056) (Yeast).